Here is a 465-residue protein sequence, read N- to C-terminus: MKEPDAIKLFVGQIPRHLEEKDLKPIFEQFGRIFELTVIKDKYTGLHKGCAFLTYCARDSALKAQSALHEQKTLPGMNRPIQVKPADSESRGDRKLFVGMLGKQQTDEDVRKMFEPFGTIDECTVLRGPDGTSKGCAFVKFQTHAEAQAAINTLHSSRTLPGASSSLVVKFADTEKERGLRRMQQVATQLGMFSPIALQFGAYSAYTQALMQQQAALVAAHSAYLSPMATMAAVQMQHMAAISANGLIATPITPSSGTSTPPAIAATPVSAIPAALGVNGYSPVPTQPTGQPAPDALYPNGVHPYPAQSPAAPVDPLQQAYAGMQHYTAAYPAAYSLVAPAFPQPPALVAQQPPPPPQQQQQQQQQQQQQQQQREGPDGCNIFIYHLPQEFTDSEILQMFVPFGHVISAKVFVDRATNQSKCFGFVSFDNPASAQAAIQAMNGFQIGMKRLKVQLKRPKDANRPY.

RRM domains lie at 7–88 and 95–174; these read IKLF…PADS and KLFV…FADT. Disordered stretches follow at residues 283–311 and 345–379; these read PVPT…QSPA and PPAL…GPDG. Pro residues predominate over residues 345–358; it reads PPALVAQQPPPPPQ. Residues 359–373 show a composition bias toward low complexity; the sequence is QQQQQQQQQQQQQQQ. The region spanning 380 to 458 is the RRM 3 domain; that stretch reads CNIFIYHLPQ…KRLKVQLKRP (79 aa).

This sequence belongs to the CELF/BRUNOL family.

The protein resides in the nucleus. Its subcellular location is the cytoplasm. Its function is as follows. RNA-binding protein involved in the regulation of pre-mRNA alternative splicing. Mediates exon inclusion and/or exclusion in pre-mRNA that are subject to tissue-specific and developmentally regulated alternative splicing. Specifically activates exon 5 inclusion of cardiac isoforms of TNNT2 during heart remodeling at the juvenile to adult transition. Activates the splicing of MAPT/Tau exon 10. Binds to muscle-specific splicing enhancer (MSE) intronic sites flanking the alternative exon 5 of TNNT2 pre-mRNA. This chain is CUGBP Elav-like family member 3 (Celf3), found in Mus musculus (Mouse).